A 348-amino-acid polypeptide reads, in one-letter code: Putative zinc metalloprotease HP_0258 (348 aa).

Residue His-16 coordinates Zn(2+). Residue Glu-17 is part of the active site. Residue His-20 coordinates Zn(2+). Helical transmembrane passes span 43–63, 93–113, 247–267, 275–295, and 324–344; these read CFFK…GGYV, WILF…YFFL, LIMG…VGAL, MLLL…LLPI, and LWLA…FNDL. A PDZ domain is found at 106–175; that stretch reads AILVYFFLAL…GELVLEIERN (70 aa).

This sequence belongs to the peptidase M50B family. The cofactor is Zn(2+).

It localises to the cell inner membrane. The protein is Putative zinc metalloprotease HP_0258 of Helicobacter pylori (strain ATCC 700392 / 26695) (Campylobacter pylori).